Reading from the N-terminus, the 249-residue chain is 5'-nucleotidase SurE (249 aa).

A divalent metal cation contacts are provided by Asp-8, Asp-9, Ser-39, and Asn-91.

Belongs to the SurE nucleotidase family. The cofactor is a divalent metal cation.

The protein localises to the cytoplasm. The enzyme catalyses a ribonucleoside 5'-phosphate + H2O = a ribonucleoside + phosphate. Its function is as follows. Nucleotidase that shows phosphatase activity on nucleoside 5'-monophosphates. The sequence is that of 5'-nucleotidase SurE from Pseudomonas aeruginosa (strain UCBPP-PA14).